The sequence spans 334 residues: Aspartate carbamoyltransferase catalytic subunit (334 aa).

Arginine 71 and threonine 72 together coordinate carbamoyl phosphate. L-aspartate is bound at residue lysine 99. Carbamoyl phosphate-binding residues include arginine 121, histidine 151, and glutamine 154. L-aspartate contacts are provided by arginine 184 and arginine 239. Carbamoyl phosphate is bound by residues glycine 280 and proline 281.

This sequence belongs to the aspartate/ornithine carbamoyltransferase superfamily. ATCase family. As to quaternary structure, heterododecamer (2C3:3R2) of six catalytic PyrB chains organized as two trimers (C3), and six regulatory PyrI chains organized as three dimers (R2).

It catalyses the reaction carbamoyl phosphate + L-aspartate = N-carbamoyl-L-aspartate + phosphate + H(+). It functions in the pathway pyrimidine metabolism; UMP biosynthesis via de novo pathway; (S)-dihydroorotate from bicarbonate: step 2/3. Functionally, catalyzes the condensation of carbamoyl phosphate and aspartate to form carbamoyl aspartate and inorganic phosphate, the committed step in the de novo pyrimidine nucleotide biosynthesis pathway. The protein is Aspartate carbamoyltransferase catalytic subunit of Pseudomonas savastanoi pv. phaseolicola (strain 1448A / Race 6) (Pseudomonas syringae pv. phaseolicola (strain 1448A / Race 6)).